Reading from the N-terminus, the 185-residue chain is TATA-box-binding protein 3 (185 aa).

2 repeat units span residues 7–84 (IENV…ANTL) and 100–178 (VQNI…KTEF).

The protein belongs to the TBP family.

In terms of biological role, general factor that plays a role in the activation of archaeal genes transcribed by RNA polymerase. Binds specifically to the TATA box promoter element which lies close to the position of transcription initiation. The polypeptide is TATA-box-binding protein 3 (Methanosarcina mazei (strain ATCC BAA-159 / DSM 3647 / Goe1 / Go1 / JCM 11833 / OCM 88) (Methanosarcina frisia)).